The following is a 505-amino-acid chain: Deoxyguanosinetriphosphate triphosphohydrolase (505 aa).

Positions Arg66–Cys273 constitute an HD domain.

The protein belongs to the dGTPase family. Type 1 subfamily. Homotetramer. It depends on Mg(2+) as a cofactor.

The enzyme catalyses dGTP + H2O = 2'-deoxyguanosine + triphosphate + H(+). In terms of biological role, dGTPase preferentially hydrolyzes dGTP over the other canonical NTPs. The sequence is that of Deoxyguanosinetriphosphate triphosphohydrolase from Escherichia coli (strain K12 / MC4100 / BW2952).